The chain runs to 129 residues: Large ribosomal subunit protein uL22 (129 aa).

This sequence belongs to the universal ribosomal protein uL22 family. As to quaternary structure, part of the 50S ribosomal subunit.

Its function is as follows. This protein binds specifically to 23S rRNA; its binding is stimulated by other ribosomal proteins, e.g. L4, L17, and L20. It is important during the early stages of 50S assembly. It makes multiple contacts with different domains of the 23S rRNA in the assembled 50S subunit and ribosome. Functionally, the globular domain of the protein is located near the polypeptide exit tunnel on the outside of the subunit, while an extended beta-hairpin is found that lines the wall of the exit tunnel in the center of the 70S ribosome. The chain is Large ribosomal subunit protein uL22 from Metamycoplasma hominis (strain ATCC 23114 / DSM 25592 / NBRC 14850 / NCTC 10111 / PG21) (Mycoplasma hominis).